Here is a 436-residue protein sequence, read N- to C-terminus: Mitochondrial substrate carrier family protein Y (436 aa).

Residues Met-1–Lys-102 form a disordered region. The Mitochondrial intermembrane portion of the chain corresponds to Met-1–Asn-137. Solcar repeat units follow at residues Ser-135 to Tyr-226 and His-236 to Gln-334. The chain crosses the membrane as a helical span at residues Val-138–Leu-158. Residues Asp-159–Gly-194 lie on the Mitochondrial matrix side of the membrane. The chain crosses the membrane as a helical span at residues Val-195–Ile-215. The Mitochondrial intermembrane segment spans residues Gln-216 to Thr-238. A helical transmembrane segment spans residues Leu-239–Val-259. At Asp-260 to Thr-313 the chain is on the mitochondrial matrix side. The helical transmembrane segment at Leu-314–Gln-334 threads the bilayer. The Mitochondrial intermembrane segment spans residues Phe-335–Glu-347. Residues Phe-348 to Gly-368 traverse the membrane as a helical segment. The Solcar 3 repeat unit spans residues Lys-350 to Leu-436. Topologically, residues Leu-369 to Ser-413 are mitochondrial matrix. A helical membrane pass occupies residues Ala-414–Ile-434. Residues Asn-435–Leu-436 are Mitochondrial intermembrane-facing.

The protein belongs to the mitochondrial carrier (TC 2.A.29) family.

Its subcellular location is the mitochondrion inner membrane. Its function is as follows. Mitochondrial solute carriers shuttle metabolites, nucleotides, and cofactors through the mitochondrial inner membrane. The chain is Mitochondrial substrate carrier family protein Y (mcfY) from Dictyostelium discoideum (Social amoeba).